The primary structure comprises 477 residues: Cytochrome c oxidase subunit 1 (477 aa).

The chain crosses the membrane as a helical span at residues 16-36 (VGTMYLMLGMWSGFGGLNLSW). The Ca(2+) site is built by Glu41 and Gly46. His62 is a binding site for Fe(II)-heme a. 6 consecutive transmembrane segments (helical) span residues 64 to 84 (IMMI…NWLL), 101 to 121 (FSFW…FIDY), 149 to 171 (ILGL…VTFL), 185 to 205 (LFVW…PVLA), 236 to 256 (LFWF…FGLV), and 269 to 289 (VFGS…GFIV). His242 provides a ligand contact to Cu cation. The segment at residues 242 to 246 (HPEVY) is a cross-link (1'-histidyl-3'-tyrosine (His-Tyr)). Position 246 (Tyr246) interacts with O2. 2 residues coordinate Cu cation: His292 and His293. A run of 2 helical transmembrane segments spans residues 309-329 (AVTM…IATI) and 340-360 (TLWV…GVIL). 2 residues coordinate Mg(2+): His370 and Asp371. His378 contributes to the heme a3 binding site. His380 is a Fe(II)-heme a binding site. A run of 2 helical transmembrane segments spans residues 382-402 (VLSM…FPFF) and 416-436 (FFLT…LGLG). Ca(2+) is bound at residue Pro443. A helical membrane pass occupies residues 455-475 (WSTIGCAMVMVSVSLFIHMQW).

The protein belongs to the heme-copper respiratory oxidase family. As to quaternary structure, component of the cytochrome c oxidase (complex IV, CIV), a multisubunit enzyme composed of a catalytic core of 3 subunits and several supernumerary subunits. The complex exists as a monomer or a dimer and forms supercomplexes (SCs) in the inner mitochondrial membrane with ubiquinol-cytochrome c oxidoreductase (cytochrome b-c1 complex, complex III, CIII). It depends on heme as a cofactor. Requires Cu cation as cofactor.

Its subcellular location is the mitochondrion inner membrane. It carries out the reaction 4 Fe(II)-[cytochrome c] + O2 + 8 H(+)(in) = 4 Fe(III)-[cytochrome c] + 2 H2O + 4 H(+)(out). It functions in the pathway energy metabolism; oxidative phosphorylation. In terms of biological role, component of the cytochrome c oxidase, the last enzyme in the mitochondrial electron transport chain which drives oxidative phosphorylation. The respiratory chain contains 3 multisubunit complexes succinate dehydrogenase (complex II, CII), ubiquinol-cytochrome c oxidoreductase (cytochrome b-c1 complex, complex III, CIII) and cytochrome c oxidase (complex IV, CIV), that cooperate to transfer electrons derived from NADH and succinate to molecular oxygen, creating an electrochemical gradient over the inner membrane that drives transmembrane transport and the ATP synthase. Cytochrome c oxidase is the component of the respiratory chain that catalyzes the reduction of oxygen to water. Electrons originating from reduced cytochrome c in the intermembrane space (IMS) are transferred via the dinuclear copper A center (CU(A)) of subunit 2 and heme A of subunit 1 to the active site in subunit 1, a binuclear center (BNC) formed by heme A3 and copper B (CU(B)). The BNC reduces molecular oxygen to 2 water molecules using 4 electrons from cytochrome c in the IMS and 4 protons from the mitochondrial matrix. This chain is Cytochrome c oxidase subunit 1 (COI), found in Pecten maximus (King scallop).